Here is a 135-residue protein sequence, read N- to C-terminus: MRVLLQLGLLALGAVCVCAIPKQSATLRALVRETLTLLSTHRTLLKGNETLRISVPAHKNHQLCIEEIFQGIDTLKNQTTQGEALATLFQNLSLIKKHIDLQKQKCGEERRRVKQFLDYLQEFLAVINTEWTIEG.

An N-terminal signal peptide occupies residues 1 to 19 (MRVLLQLGLLALGAVCVCA). N-linked (GlcNAc...) asparagine glycosylation is found at asparagine 48, asparagine 77, and asparagine 91.

The protein belongs to the IL-5 family. As to quaternary structure, homodimer; disulfide-linked. Interacts with IL5RA. Interacts with CSF2RB.

Its subcellular location is the secreted. Its function is as follows. Homodimeric cytokine expressed predominantly by T-lymphocytes and NK cells that plays an important role in the survival, differentiation, and chemotaxis of eosinophils. Also acts on activated and resting B-cells to induce immunoglobulin production, growth, and differentiation. Mechanistically, exerts its biological effects through a receptor composed of IL5RA subunit and the cytokine receptor common subunit beta/CSF2RB. Binding to the receptor leads to activation of various kinases including LYN, SYK and JAK2 and thereby propagates signals through the RAS-MAPK and JAK-STAT5 pathways respectively. The sequence is that of Interleukin-5 (IL5) from Cavia porcellus (Guinea pig).